The chain runs to 159 residues: Ribosomal RNA large subunit methyltransferase H (159 aa).

Residues Leu76, Gly108, and 127-132 (FSKMTF) contribute to the S-adenosyl-L-methionine site.

The protein belongs to the RNA methyltransferase RlmH family. Homodimer.

Its subcellular location is the cytoplasm. The catalysed reaction is pseudouridine(1915) in 23S rRNA + S-adenosyl-L-methionine = N(3)-methylpseudouridine(1915) in 23S rRNA + S-adenosyl-L-homocysteine + H(+). In terms of biological role, specifically methylates the pseudouridine at position 1915 (m3Psi1915) in 23S rRNA. In Staphylococcus saprophyticus subsp. saprophyticus (strain ATCC 15305 / DSM 20229 / NCIMB 8711 / NCTC 7292 / S-41), this protein is Ribosomal RNA large subunit methyltransferase H.